The chain runs to 452 residues: Pup--protein ligase (452 aa).

Position 9 (E9) interacts with Mg(2+). R53 is an ATP binding site. Y55 is a Mg(2+) binding site. Residue D57 is the Proton acceptor of the active site. Mg(2+) is bound at residue E63. The ATP site is built by T66 and W419.

Belongs to the Pup ligase/Pup deamidase family. Pup-conjugating enzyme subfamily.

It carries out the reaction ATP + [prokaryotic ubiquitin-like protein]-L-glutamate + [protein]-L-lysine = ADP + phosphate + N(6)-([prokaryotic ubiquitin-like protein]-gamma-L-glutamyl)-[protein]-L-lysine.. The protein operates within protein degradation; proteasomal Pup-dependent pathway. It participates in protein modification; protein pupylation. Its function is as follows. Catalyzes the covalent attachment of the prokaryotic ubiquitin-like protein modifier Pup to the proteasomal substrate proteins, thereby targeting them for proteasomal degradation. This tagging system is termed pupylation. The ligation reaction involves the side-chain carboxylate of the C-terminal glutamate of Pup and the side-chain amino group of a substrate lysine. The polypeptide is Pup--protein ligase (Thermobifida fusca (strain YX)).